Here is a 398-residue protein sequence, read N- to C-terminus: Lysophosphatidylserine lipase ABHD12 (398 aa).

The Cytoplasmic portion of the chain corresponds to 1–74 (MRKRTEPVAL…RKGLWLRLRK (74 aa)). Residues 75–95 (ILFCVLGLYIAIPFLIKLCPG) traverse the membrane as a helical segment. Residues 96 to 398 (IQAKLIFLNF…LGKSEPEHQH (303 aa)) are Extracellular-facing. Asn123 is a glycosylation site (N-linked (GlcNAc...) asparagine). Residue Ser246 is the Nucleophile of the active site. Catalysis depends on charge relay system residues Asp333 and His372.

The protein belongs to the serine esterase family.

Its subcellular location is the endoplasmic reticulum membrane. It carries out the reaction 1-(9Z-octadecenoyl)-sn-glycero-3-phospho-L-serine + H2O = sn-glycero-3-phospho-L-serine + (9Z)-octadecenoate + H(+). The enzyme catalyses 1-(9Z-octadecenoyl)-sn-glycero-3-phospho-(1'-sn-glycerol) + H2O = sn-glycero-3-phospho-(1'-sn-glycerol) + (9Z)-octadecenoate + H(+). It catalyses the reaction 1-(9Z-octadecenoyl)-sn-glycero-3-phospho-(1D-myo-inositol) + H2O = sn-glycero-3-phospho-1D-myo-inositol + (9Z)-octadecenoate + H(+). The catalysed reaction is 1-(9Z-octadecenoyl)-sn-glycero-3-phosphoethanolamine + H2O = sn-glycero-3-phosphoethanolamine + (9Z)-octadecenoate + H(+). It carries out the reaction 1-(9Z-octadecenoyl)-sn-glycero-3-phosphocholine + H2O = 1-(9Z-octadecenoyl)-sn-glycerol + phosphocholine + H(+). The enzyme catalyses 2-(9Z-octadecenoyl)-glycerol + H2O = glycerol + (9Z)-octadecenoate + H(+). It catalyses the reaction 1-hexadecanoyl-sn-glycero-3-phospho-L-serine + H2O = sn-glycero-3-phospho-L-serine + hexadecanoate + H(+). The catalysed reaction is 2-(5Z,8Z,11Z,14Z-eicosatetraenoyl)-glycerol + H2O = glycerol + (5Z,8Z,11Z,14Z)-eicosatetraenoate + H(+). It carries out the reaction Hydrolyzes glycerol monoesters of long-chain fatty acids.. The enzyme catalyses 1-decanoylglycerol + H2O = decanoate + glycerol + H(+). It catalyses the reaction 1-dodecanoylglycerol + H2O = dodecanoate + glycerol + H(+). The catalysed reaction is 1-tetradecanoylglycerol + H2O = tetradecanoate + glycerol + H(+). It carries out the reaction 2-hexadecanoylglycerol + H2O = glycerol + hexadecanoate + H(+). The enzyme catalyses 1-(9Z-octadecenoyl)-glycerol + H2O = glycerol + (9Z)-octadecenoate + H(+). It catalyses the reaction 2-(9Z,12Z-octadecadienoyl)-glycerol + H2O = (9Z,12Z)-octadecadienoate + glycerol + H(+). The catalysed reaction is 1-(5Z,8Z,11Z,14Z-eicosatetraenoyl)-glycerol + H2O = glycerol + (5Z,8Z,11Z,14Z)-eicosatetraenoate + H(+). It carries out the reaction 1-(9Z,12Z-octadecadienoyl)-glycerol + H2O = (9Z,12Z)-octadecadienoate + glycerol + H(+). The enzyme catalyses 1-hexadecanoylglycerol + H2O = glycerol + hexadecanoate + H(+). It catalyses the reaction 1-octadecanoylglycerol + H2O = octadecanoate + glycerol + H(+). The catalysed reaction is 1-octadecanoyl-2-(9,10-epoxyoctadecanoyl)-sn-glycero-3-phospho-L-serine + H2O = 9,10-epoxyoctadecanoate + 1-octadecanoyl-sn-glycero-3-phosphoserine + H(+). It carries out the reaction 1-octadecanoyl-2-(10-hydroxyoctadecanoyl)-sn-glycero-3-phospho-L-serine + H2O = 1-octadecanoyl-sn-glycero-3-phosphoserine + 10-hydroxyoctadecanoate + H(+). The enzyme catalyses 1-hexadecanoyl-2-(10-hydroxyoctadecanoyl)-sn-glycero-3-phospho-L-serine + H2O = 10-hydroxyoctadecanoate + 1-hexadecanoyl-sn-glycero-3-phospho-L-serine + H(+). Its function is as follows. Lysophosphatidylserine (LPS) lipase that mediates the hydrolysis of lysophosphatidylserine, a class of signaling lipids that regulates immunological and neurological processes. Represents a major lysophosphatidylserine lipase in the brain, thereby playing a key role in the central nervous system. Also able to hydrolyze oxidized phosphatidylserine; oxidized phosphatidylserine is produced in response to severe inflammatory stress and constitutes a proapoptotic 'eat me' signal. Also has monoacylglycerol (MAG) lipase activity: hydrolyzes 2-arachidonoylglycerol (2-AG), thereby acting as a regulator of endocannabinoid signaling pathways. Has a strong preference for very-long-chain lipid substrates; substrate specificity is likely due to improved catalysis and not improved substrate binding. The sequence is that of Lysophosphatidylserine lipase ABHD12 from Macaca fascicularis (Crab-eating macaque).